Reading from the N-terminus, the 668-residue chain is Potassium voltage-gated channel subfamily KQT member 1 (668 aa).

Topologically, residues 1 to 119 are cytoplasmic; that stretch reads MDTASSPPSA…YNFLERPTGW (119 aa). A Phosphoserine; by PKA modification is found at Ser27. The helical transmembrane segment at 120–141 threads the bilayer; that stretch reads KCFVYHFTVFLIVLVCLIFSVL. At 142-152 the chain is on the extracellular side; it reads STIEQYAALAT. The chain crosses the membrane as a helical span at residues 153-175; sequence GTLFWMEIVLVVFFGTEYVVRLW. Residues 176–191 are Cytoplasmic-facing; sequence SAGCRSKYVGIWGRLR. A helical transmembrane segment spans residues 192 to 217; sequence FARKPISIIDLIVVVASMVVLCVGSK. Topologically, residues 218–225 are extracellular; the sequence is GQVFATSA. The helical; Voltage-sensor transmembrane segment at 226-241 threads the bilayer; it reads IRGIRFLQILRMLHVD. The tract at residues 237-245 is interaction with KCNE3; the sequence is MLHVDRQGG. Over 242-259 the chain is Cytoplasmic; the sequence is RQGGTWRLLGSVVFIHRQ. Gln243 lines the a 1,2-diacyl-sn-glycero-3-phospho-(1D-myo-inositol-4,5-bisphosphate) pocket. A helical transmembrane segment spans residues 260 to 282; that stretch reads ELITTLYIGFLGLIFSSYFVYLA. Residues 283–298 are Extracellular-facing; it reads EKDAVNESGRIEFGSY. The N-linked (GlcNAc...) asparagine glycan is linked to Asn288. Residues 299 to 319 constitute an intramembrane region (pore-forming); that stretch reads ADALWWGVVTVTTIGYGDKVP. The Extracellular portion of the chain corresponds to 320 to 321; that stretch reads QT. Residues 322–347 traverse the membrane as a helical segment; sequence WVGKTIASCFSVFAISFFALPAGILG. Residues 348–668 lie on the Cytoplasmic side of the membrane; it reads SGFALKVQQK…VPQTGPDEGS (321 aa). The segment at 369-381 is interaction with CALM; that stretch reads AAASLIQTAWRCY. A phosphoserine mark is found at Ser406 and Ser408. The interaction with CALM; calcium-dependent stretch occupies residues 514-528; that stretch reads KVIRRMQYFVAKKKF. Positions 534 to 571 are interaction with KCNE1 C-terminus; the sequence is PYDVRDVIEQYSQGHLNLMVRIKELQRRLDQSIGKPSL. A coiled-coil region spans residues 584-620; that stretch reads SNTIGARLNRVEDKVTQLDQRLVIITDMLHQLLSMQQ. Residues 587–615 form an interaction with AKAP9 region; it reads IGARLNRVEDKVTQLDQRLVIITDMLHQL. Residues 588–619 are C-terminal assembly domain (tetramerization); that stretch reads GARLNRVEDKVTQLDQRLVIITDMLHQLLSMQ.

Belongs to the potassium channel family. KQT (TC 1.A.1.15) subfamily. Kv7.1/KCNQ1 sub-subfamily. As to quaternary structure, tetramer. Heterotetramer with KCNE1; form the native cardiac channel I(Ks) which increases the amplitude and slows down the activation kinetics of outward potassium current and targets to the membrane raft. Interacts (via C-terminus) with CALM; forms a heterooctameric structure (with 4:4 KCNQ1:CALM stoichiometry) in a calcium-independent manner. Interacts with AKAP9; targets protein kinase A (PKA) catalytic and regulatory subunits and protein phosphatase 1 (PP1) to the KCNQ1-KCNE1 complex, allowing PKA-mediated phosphorylation and increase of delayed rectifier potassium channel activity. Interacts with KCNE2; form an heterooligomer complex that targets to the membrane raft and leading to currents with an apparently instantaneous activation, a rapid deactivation process and a linear current-voltage relationship and decreases the amplitude of the outward current. Interacts with AP2M1; mediates estrogen-induced internalization via clathrin-coated vesicles. Interacts with NEDD4L; promotes internalization and decreases I(Ks) currents. Interacts with USP2; counteracts the NEDD4L-specific down-regulation of I(Ks) and restore plasma membrane localization. Heterotetramer with KCNQ5; has a voltage-gated potassium channel activity. Interacts with KCNE3; four KCNE3 molecules are bound to one KCNQ1 tetramer (4:4 KCNQ1:KCNE3 stoichiometry); alters membrane raft localization; affects KCNQ1 structure and gating properties. Interacts with KCNE4; impairs KCNQ1 localization in lipid rafts and inhibits voltage-gated potassium channel activity. Interacts with KCNE5; impairs KCNQ1 localization in lipid rafts and only conducts current upon strong and continued depolarization. Interacts with SLC5A3; forms coregulatory channel-transporter complexes that modulate Na(+)-coupled myo-inositol influx through the transporter. Phosphorylation at Ser-27 by PKA; increases delayed rectifier potassium channel activity of the KCNQ1-KCNE1 complex through a macromolecular complex that includes PKA, PP1, and the targeting protein AKAP9. Post-translationally, ubiquitinated by NEDD4L; promotes internalization. The ubiquitinylated form is internalized through a clathrin-mediated endocytosis by interacting with AP2M1 and is recycled back to the cell membrane via RAB4A and RAB11A. In terms of processing, deubiquitinated by USP2; counteracts the NEDD4L-specific down-regulation of I(Ks) and restores the membrane localization. Expressed in heart, kidney and salivary glands. Detected in the cochlea. Almost undetectable in brain, skeletal muscle and liver. Widely expressed in embryonic and neonatal tissues. Expressed in choroid plexus epithelium (at protein level).

The protein resides in the cell membrane. Its subcellular location is the cytoplasmic vesicle membrane. It localises to the early endosome. It is found in the membrane raft. The protein localises to the endoplasmic reticulum. The protein resides in the basolateral cell membrane. Its subcellular location is the apical cell membrane. It catalyses the reaction K(+)(in) = K(+)(out). Its activity is regulated as follows. PIP2 molecule is essential to activate KCNQ channels by inducing the coupling of the voltage-sensing domain (VSD) and the pore-forming domain (PD). Upon channel activation, PIP2 disrupts the VSD-calmodulin/CALM interactions, causing the release of CALM from the VSD which triggers the opening of the gate. Calcium potentiates KCNQ1 channel current through calcium-bound CALM. Calcium-bound CALM competes with PIP2 to stabilize the channel open state. Functionally, pore-forming subunit of the voltage-gated potassium (Kv) channel involved in the regulation of cardiomyocyte excitability and important in normal development and functions of myocardium, inner ear, stomach and colon. Associates with KCNE beta subunits that modulates current kinetics. Induces a voltage-dependent by rapidly activating and slowly deactivating potassium-selective outward current. Also promotes a delayed voltage activated potassium current showing outward rectification characteristic. During beta-adrenergic receptor stimulation participates in cardiac increases the amplitude and slows down the activation kinetics of outward potassium current I(Ks). Muscarinic agonist oxotremorine-M strongly suppresses KCNQ1/KCNE1 current. When associated with KCNE3, forms the potassium channel that is important for cyclic AMP-stimulated intestinal secretion of chloride ions. This interaction with KCNE3 is reduced by 17beta-estradiol, resulting in the reduction of currents. During conditions of increased substrate load, maintains the driving force for proximal tubular and intestinal sodium ions absorption, gastric acid secretion, and cAMP-induced jejunal chloride ions secretion. Allows the provision of potassium ions to the luminal membrane of the secretory canaliculus in the resting state as well as during stimulated acid secretion. When associated with KCNE2, forms a heterooligomer complex leading to currents with an apparently instantaneous activation, a rapid deactivation process and a linear current-voltage relationship and decreases the amplitude of the outward current. When associated with KCNE4, inhibits voltage-gated potassium channel activity. When associated with KCNE5, this complex only conducts current upon strong and continued depolarization. Also forms a heterotetramer with KCNQ5; has a voltage-gated potassium channel activity. Binds with phosphatidylinositol 4,5-bisphosphate. KCNQ1-KCNE2 channel associates with Na(+)-coupled myo-inositol symporter in the apical membrane of choroid plexus epithelium and regulates the myo-inositol gradient between blood and cerebrospinal fluid with an impact on neuron excitability. This Mus musculus (Mouse) protein is Potassium voltage-gated channel subfamily KQT member 1.